We begin with the raw amino-acid sequence, 260 residues long: Adenosylcobinamide-GDP ribazoletransferase (260 aa).

Helical transmembrane passes span 7–27 (WYFL…TRLP), 45–65 (LMGL…HWLG), 117–137 (AYGV…LASF), 145–165 (WALI…IALY), 187–207 (LLLG…ALAI), and 210–230 (WLIL…GRWF).

The protein belongs to the CobS family. Mg(2+) serves as cofactor.

The protein localises to the cell inner membrane. It carries out the reaction alpha-ribazole + adenosylcob(III)inamide-GDP = adenosylcob(III)alamin + GMP + H(+). The enzyme catalyses alpha-ribazole 5'-phosphate + adenosylcob(III)inamide-GDP = adenosylcob(III)alamin 5'-phosphate + GMP + H(+). The protein operates within cofactor biosynthesis; adenosylcobalamin biosynthesis; adenosylcobalamin from cob(II)yrinate a,c-diamide: step 7/7. In terms of biological role, joins adenosylcobinamide-GDP and alpha-ribazole to generate adenosylcobalamin (Ado-cobalamin). Also synthesizes adenosylcobalamin 5'-phosphate from adenosylcobinamide-GDP and alpha-ribazole 5'-phosphate. This Synechocystis sp. (strain ATCC 27184 / PCC 6803 / Kazusa) protein is Adenosylcobinamide-GDP ribazoletransferase.